The sequence spans 506 residues: MANNAAACAERATNDMLIGPDWAINIELCDIINMEPSQAKEAVKVLKKRLGSKNSKVQILALYALETLSKNCGESVYQLIVDRDILPDMVKIVKKKPDLTVREKILSLLDTWQEAFGGSGGRFPQYYNAYNELRSAGIEFPPRTESSVPFFTPPQTQPIVAQATASDEDAAIQASLQSDDASALSMEEIQSAQGSVDVLTDMLGALDPSHPEGLKEELIVDLVEQCRTYQRRVMALVNTTSDEELMCQGLALNDNLQRVLQHHDDKAKGNSVPATAPTPIPLVSINHDDDDDESDDDFLQLAHRSKRESARGTGQGNFNPILPPPPSSMRPVHVDSGAMDFLSGDVYKPQETFENVKPPSTSQSSNHDYSAPIFDEPVPQSKSPEHALFTKPVYDQTEQLPPAPWETQEPRKYPPSMSARTNKRPEYFQHNVPQHSSSASESSYDDLLGQSRNLSLNPTASAAPVTPPKKDDKPEDILFKDLMDFAKTRTSSSSSSKPNNQNNKPF.

A VHS domain is found at 12-141 (ATNDMLIGPD…ELRSAGIEFP (130 aa)). Positions 180–268 (DASALSMEEI…VLQHHDDKAK (89 aa)) constitute a GAT domain. Disordered regions lie at residues 266-328 (KAKG…PPSS), 351-384 (ETFENVKPPSTSQSSNHDYSAPIFDEPVPQSKSP), and 398-477 (EQLP…PEDI). Over residues 288 to 298 (DDDDDESDDDF) the composition is skewed to acidic residues. S294 carries the phosphoserine modification. Over residues 358–368 (PPSTSQSSNHD) the composition is skewed to polar residues. Position 383 is a phosphoserine (S383). A compositionally biased stretch (polar residues) spans 450-460 (QSRNLSLNPTA). Residues 468-477 (PKKDDKPEDI) show a composition bias toward basic and acidic residues.

The protein belongs to the TOM1 family. As to expression, preferentially expressed in cauline leaves.

The protein resides in the membrane. Its function is as follows. Might contribute to the loading of the ESCRT machinery. The chain is TOM1-like protein 3 from Arabidopsis thaliana (Mouse-ear cress).